Consider the following 361-residue polypeptide: Isopentenyl-diphosphate delta-isomerase (361 aa).

12 to 13 (RK) lines the substrate pocket. Residues serine 70, 71–73 (SMT), serine 101, and asparagine 130 each bind FMN. 101-103 (SMR) contributes to the substrate binding site. Substrate is bound at residue glutamine 165. Position 166 (glutamate 166) interacts with Mg(2+). FMN-binding positions include lysine 197 and 310–311 (AG).

The protein belongs to the IPP isomerase type 2 family. In terms of assembly, homooctamer. Dimer of tetramers. Requires FMN as cofactor. NADPH is required as a cofactor. The cofactor is Mg(2+).

The protein localises to the cytoplasm. The catalysed reaction is isopentenyl diphosphate = dimethylallyl diphosphate. Involved in the biosynthesis of isoprenoids. Catalyzes the 1,3-allylic rearrangement of the homoallylic substrate isopentenyl (IPP) to its allylic isomer, dimethylallyl diphosphate (DMAPP). The chain is Isopentenyl-diphosphate delta-isomerase from Chlorobium luteolum (strain DSM 273 / BCRC 81028 / 2530) (Pelodictyon luteolum).